The sequence spans 238 residues: NADH-quinone oxidoreductase subunit I (238 aa).

4Fe-4S ferredoxin-type domains follow at residues 81-111 (LVPR…IEAG) and 123-152 (VKFV…MDSG). Cys91, Cys94, Cys97, Cys101, Cys132, Cys135, Cys138, and Cys142 together coordinate [4Fe-4S] cluster.

Belongs to the complex I 23 kDa subunit family. NDH-1 is composed of 14 different subunits. Subunits NuoA, H, J, K, L, M, N constitute the membrane sector of the complex. Requires [4Fe-4S] cluster as cofactor.

The protein localises to the cell inner membrane. It catalyses the reaction a quinone + NADH + 5 H(+)(in) = a quinol + NAD(+) + 4 H(+)(out). Its function is as follows. NDH-1 shuttles electrons from NADH, via FMN and iron-sulfur (Fe-S) centers, to quinones in the respiratory chain. The immediate electron acceptor for the enzyme in this species is believed to be ubiquinone. Couples the redox reaction to proton translocation (for every two electrons transferred, four hydrogen ions are translocated across the cytoplasmic membrane), and thus conserves the redox energy in a proton gradient. This Anaeromyxobacter sp. (strain Fw109-5) protein is NADH-quinone oxidoreductase subunit I.